A 294-amino-acid chain; its full sequence is Flagellin B1 (294 aa).

A propeptide spanning residues Met1–Gly8 is cleaved from the precursor.

It belongs to the archaeal flagellin family.

It localises to the archaeal flagellum. Flagellin is the subunit protein which polymerizes to form the filaments of archaeal flagella. The protein is Flagellin B1 (flaB1) of Thermococcus kodakarensis (strain ATCC BAA-918 / JCM 12380 / KOD1) (Pyrococcus kodakaraensis (strain KOD1)).